A 470-amino-acid polypeptide reads, in one-letter code: Ubiquitin carboxyl-terminal hydrolase calypso (470 aa).

In terms of domain architecture, UCH catalytic spans 43-274 (GWLELESDPG…IRFNLMAVVP (232 aa)). Catalysis depends on C129, which acts as the Nucleophile. H211 (proton donor) is an active-site residue. The tract at residues 305 to 324 (DEQGEGGNGDPQRPDTPSTL) is disordered. A ULD domain is found at 373–401 (NYDKFICTFLSMLAHQGVLGELVSQHLLP). Positions 403 to 470 (KKISGQSAAN…KGRNKCKKRK (68 aa)) are positively charged C-terminal tail required for binding nucleosomes. Positions 422-451 (ANAGATAAGAAGAAPKSQQQQAAAAKNGKS) are enriched in low complexity. Positions 422-470 (ANAGATAAGAAGAAPKSQQQQAAAAKNGKSPSKTPGRRRKGRNKCKKRK) are disordered. Residues 456–470 (PGRRRKGRNKCKKRK) are compositionally biased toward basic residues.

The protein belongs to the peptidase C12 family. BAP1 subfamily. Catalytic component of the polycomb repressive deubiquitinase (PR-DUB) complex, at least composed of caly/calypso, Asx and sba (MBD5/6 homolog). The PR-DUB complex associates with nucleosomes to mediate deubiquitination of histone H2AK118ub1 substrates; the association requires the positively charged C-terminal tail of caly, probably due to direct binding of DNA. Interacts (via ULD domain) with Asx (via DEUBAD domain); the interaction produces a stable heterodimer with a composite binding site for ubiquitin. Homodimerizes (via coiled-coil hinge-region between the UCH and ULD domains) to mediate assembly of 2 copies of the caly-Asx heterodimer into a bisymmetric tetramer; dimerization enhances PR-DUB association with nucleosomes.

The protein resides in the nucleus. It catalyses the reaction Thiol-dependent hydrolysis of ester, thioester, amide, peptide and isopeptide bonds formed by the C-terminal Gly of ubiquitin (a 76-residue protein attached to proteins as an intracellular targeting signal).. Functionally, catalytic component of the polycomb repressive deubiquitinase (PR-DUB) complex, a complex that specifically mediates deubiquitination of histone H2A monoubiquitinated at 'Lys-119' (H2AK118ub1). Mediates bisymmetric organization of the PR-DUB complex and is involved in association with nucleosomes to mediate deubiquitination. Does not deubiquitinate monoubiquitinated histone H2B. Required to maintain the transcriptionally repressive state of homeotic genes throughout development. The PR-DUB complex has weak or no activity toward 'Lys-48'- and 'Lys-63'-linked polyubiquitin chains. Polycomb group (PcG) protein. This Drosophila ananassae (Fruit fly) protein is Ubiquitin carboxyl-terminal hydrolase calypso.